We begin with the raw amino-acid sequence, 256 residues long: DNA repair protein RecO (256 aa).

It belongs to the RecO family.

Involved in DNA repair and RecF pathway recombination. The protein is DNA repair protein RecO of Rhizobium etli (strain CIAT 652).